Here is a 1579-residue protein sequence, read N- to C-terminus: MERVLADALLTQSREPGELLGALCGGEASAERAETLRLVLQRLEERGAGAGALAKAAHEVARDHLVPLLHASQGGGPARPRVLRAASAALRSCARLAGPELAVTLAEEALRELPSAPAVELLAAVAPCLRAPEDAPLLRRLGRASVELALAGDAPPAVGARLLPALAQSAEPALRAAWDALSSAGPGAEGSTGPELLVLSALAEKLLTNHERHGDLDARLCGRFWRTVQAGLGRAQDGLTRKRARYLLQRAVQVSAELAVDCSCSPQDTKGPSLFWWSEKRKDELLKFWENYILIMEILEGNQIHVIKPALPKLNRLFECAVSEENGCWLFHPSWHTCIYKRMFESENKILAKEGVIHFLELYDVKSLPYSPELSEFITGPLMDALSESCLYSRSPGQPLGSDSPLGLKLQKFLVTYTSLLPEETKSCFLLKLIQRMADRHWCAVPVLFLSRALASIPSCKALGGEGLLALRDVLQRTMITHQVLLRGAAQCYLLQTAMRLVDVEKVSLSDISAFLLSLRQEESLGRGTVLWTELCDWLRVNERYFKQSSLGGSDGQEASLNAYVKNLVQEFVKSPGWEKESSFMPDWLDARLTALMVLLAVDVEGLKTKFREKQRTQNVLRIFLDPLLDALGKLGTNAYMPLLRTDRCLQLLVRLLHSCVPRRPGAQDDEVSTALQGSIMSASESVSQFVLRRLTMNELQDVADLDRCQLYLTVLSELMSLQVKLGWKAGNPISRVLSPLKNACVRHLQEAEDRQEPTLSHQVQRVVSMAALAALCEAVDQYPVLQPDSPNAEPVDRFLSALPLNHVLQKPRSEEQSIGVCPLENGSVFEESLSSKGWGKVVAQYLHDQWVCLSFLLRKHHHLIPSTESDVLEGFLPTAETPVQALQAALDVLTVLPAGRILPVFRCMEVLVPKLLTSEETLCIESFDVAWKIISSLSNTQLTFWPNLKAFVHFVFDHEILTIAAKLKGQVYFKIKEIMCKMIEMSSIKSGVFNILIRHCCQSWLVAASGVSQGSFSSAKDYSELVLEACVFGTVFRRDQRLIQDVQTFIENLGQGCAANVIIENAKREDYYVRICAIKFLCLLDGSDVSHKLFLEALAIKLLDKDESASRSRTRYHENSLQHRVKNRVWQTLLVLFPAFDQNFLHGIIDKVFHAGFTNNQASIKYFIEWLIILILHKFPEFLPKFWACFSYGEEKIKASICTFLSVLSHLDIIVQNIPEKKLVLKQALTVALQWCLSHNFSVRLYALVALKKAWHLCKTLQFEECGAWTAVIECSLSQAESMHGAGNARKNWQRIQDHFFFSTFHPLKDYCLETIFYTLPRLSGVTGEEWIALDKFANFTDIPSNAGSQWYLSGTALGELSPGDWSQQDQGSTLGEADSQSEWADVQKKIIPWGQSALESDLELEFQDRAAKLGKSISRLIVVASLIDKPTNLGGLCRTCEVFGAAVLVVGSLQCVSDRQFQHLSVSAEQWLPLVEVRPSQLMNYLQQKKAEGYTVIGVEQTAQSSDLAQYRFPEKSLLLLGNEREGIPANLIQQLDVCVEIPQQGIIRSLNVHVSGALLIWEYTRQQLLGCAEPPS.

M1 is modified (N-acetylmethionine). Residues V1501, G1524, I1544, Q1546, and L1553 each coordinate S-adenosyl-L-homocysteine.

This sequence belongs to the class IV-like SAM-binding methyltransferase superfamily. RNA methyltransferase TrmH family. As to quaternary structure, monomer and homodimer.

It catalyses the reaction guanosine(18) in tRNA + S-adenosyl-L-methionine = 2'-O-methylguanosine(18) in tRNA + S-adenosyl-L-homocysteine + H(+). S-adenosyl-L-methionine-dependent 2'-O-ribose methyltransferase that catalyzes the formation of 2'-O-methylguanosine at position 18 (Gm18) in a subset of tRNA. Selectively mediates Gm18 methylation of tRNAGln-TTG/CTG and tRNASer-TGA/GCT. Gm18 modification can enhance the stability of modified tRNAs. In Mus musculus (Mouse), this protein is tRNA (guanosine(18)-2'-O)-methyltransferase TARBP1.